The sequence spans 333 residues: Cinnamoyl-CoA reductase 1 (333 aa).

NADP(+)-binding positions include 13 to 19, arginine 38, lysine 44, 64 to 65, 84 to 86, tyrosine 157, lysine 161, 184 to 187, and serine 199; these read GAGGFIA, DL, TAS, and PVLV. Cysteine 150 and cysteine 158 are oxidised to a cystine. Catalysis depends on lysine 161, which acts as the Proton donor.

It belongs to the NAD(P)-dependent epimerase/dehydratase family. Dihydroflavonol-4-reductase subfamily. In terms of processing, the formation of a reversible disulfide bond reduces activity by perturbing the positioning of nearby catalytic residues. In terms of tissue distribution, expressed in flowers, leaves and stems.

It is found in the cytoplasm. It carries out the reaction (E)-coniferaldehyde + NADP(+) + CoA = (E)-feruloyl-CoA + NADPH + H(+). The enzyme catalyses (E)-4-coumaraldehyde + NADP(+) + CoA = (E)-4-coumaroyl-CoA + NADPH + H(+). It catalyses the reaction (E)-sinapaldehyde + NADP(+) + CoA = (E)-sinapoyl-CoA + NADPH + H(+). The catalysed reaction is (E)-cinnamaldehyde + NADP(+) + CoA = (E)-cinnamoyl-CoA + NADPH + H(+). It participates in aromatic compound metabolism; phenylpropanoid biosynthesis. Its activity is regulated as follows. Inhibited by sodium iodide-mediated oxidation. Its function is as follows. Involved in the latter stages of lignin biosynthesis. Catalyzes one of the last steps of monolignol biosynthesis, the conversion of cinnamoyl-CoAs into their corresponding cinnamaldehydes. Mediates the conversion of feruloyl CoA to coniferylaldehyde. Also active toward p-coumaroyl-CoA and sinapoyl-CoA. Involved in the production of floral volatile phenylpropanoids in flowers of fragrant cultivars (e.g. cv. Mitchell and cv. V26) from cinnamic acid, a common precursor with the anthocyanin biosynthesis pathway involved in flower pigmentation. The chain is Cinnamoyl-CoA reductase 1 from Petunia hybrida (Petunia).